The following is a 422-amino-acid chain: Protein TEX1 (422 aa).

WD repeat units follow at residues 61 to 100, 158 to 197, 207 to 246, 251 to 290, and 293 to 332; these read ITPN…FDKS, GSKT…SSVC, EDND…LEVC, AHTG…CELI, and DLNS…LLHS. Residues 388–422 are disordered; the sequence is KRRKNNGGGNNHNKRTSKNTDRIGKDRPSRFNSKK. The span at 405–416 shows a compositional bias: basic and acidic residues; the sequence is KNTDRIGKDRPS.

This sequence belongs to the THOC3 family. Component of the transcription/export (TREX) complex and the THO complex.

It localises to the nucleus. Component of the TREX complex, which operates in coupling transcription elongation to mRNA export. The sequence is that of Protein TEX1 (TEX1) from Saccharomyces cerevisiae (strain ATCC 204508 / S288c) (Baker's yeast).